A 119-amino-acid polypeptide reads, in one-letter code: Methylglyoxal synthase (119 aa).

The MGS-like domain occupies 1–119 (MKIALIAHDK…KTAELIIKQF (119 aa)). Substrate is bound by residues histidine 8, lysine 12, 34–37 (TGTT), and 54–55 (SG). Catalysis depends on aspartate 60, which acts as the Proton donor/acceptor. Histidine 87 contributes to the substrate binding site.

It belongs to the methylglyoxal synthase family.

It catalyses the reaction dihydroxyacetone phosphate = methylglyoxal + phosphate. In terms of biological role, catalyzes the formation of methylglyoxal from dihydroxyacetone phosphate. This Clostridium beijerinckii (strain ATCC 51743 / NCIMB 8052) (Clostridium acetobutylicum) protein is Methylglyoxal synthase.